Here is a 408-residue protein sequence, read N- to C-terminus: MNFKCVQFQSIFNILFILIISFPGGLIYLLTGSTLSFWLRESEFDKITIGLFGLVNFIYILKFLWGPLLEKISFSTLSNRGYKYCLVITLINCIVCVYVLTSFNPNTNFTPFVLCLIVLAFFSSIYDMLIQSSQMLLITDKNWGISEAACTTGFRIGILISGSGALYLSTIISWQDVYRTMAILCIPSLLLIIFYPLKFKDKMIANDFDKFFSAFYDFIKKPKWIVIISFMLLYRLQDSFLSIMPNMFYLDIGYTKQDLAIGYKAFGMCAAIFGGVIGGFLCRKYEYSYLLKRVLIYHALSSLSFIYLYFLNQDIISLYIAVFCQEFTKGLTMSPFFSYQLKCCSSRYCITQIALITSITNVGTILIGSISGYAATYLGWSYFFIVAGLCFIPAYILILYLPKTINSV.

Transmembrane regions (helical) follow at residues 11-31 (IFNI…YLLT), 49-69 (IGLF…GPLL), 84-104 (YCLV…TSFN), 110-130 (TPFV…DMLI), 154-174 (FRIG…IISW), 177-197 (VYRT…FYPL), 224-244 (WIVI…LSIM), 261-281 (IGYK…GGFL), 294-311 (VLIY…LYFL), 315-337 (IISL…SPFF), 353-373 (IALI…ISGY), and 382-402 (YFFI…LYLP).

It belongs to the major facilitator superfamily.

Its subcellular location is the cell inner membrane. The protein is Putative transporter AmpG 2 (ampG2) of Rickettsia typhi (strain ATCC VR-144 / Wilmington).